A 187-amino-acid chain; its full sequence is Peptide deformylase (187 aa).

The Fe cation site is built by cysteine 107 and histidine 149. The active site involves glutamate 150. Histidine 153 contacts Fe cation.

This sequence belongs to the polypeptide deformylase family. It depends on Fe(2+) as a cofactor.

The catalysed reaction is N-terminal N-formyl-L-methionyl-[peptide] + H2O = N-terminal L-methionyl-[peptide] + formate. Its function is as follows. Removes the formyl group from the N-terminal Met of newly synthesized proteins. Requires at least a dipeptide for an efficient rate of reaction. N-terminal L-methionine is a prerequisite for activity but the enzyme has broad specificity at other positions. The protein is Peptide deformylase of Synechocystis sp. (strain ATCC 27184 / PCC 6803 / Kazusa).